Reading from the N-terminus, the 157-residue chain is Protein FAM162B (157 aa).

Residues 104–123 (ACYIMIGLTIVACFAVIVSA) form a helical membrane-spanning segment.

This sequence belongs to the UPF0389 family.

The protein resides in the membrane. The polypeptide is Protein FAM162B (Fam162b) (Mus musculus (Mouse)).